The sequence spans 455 residues: Argininosuccinate lyase (455 aa).

The protein belongs to the lyase 1 family. Argininosuccinate lyase subfamily.

Its subcellular location is the cytoplasm. It carries out the reaction 2-(N(omega)-L-arginino)succinate = fumarate + L-arginine. The protein operates within amino-acid biosynthesis; L-arginine biosynthesis; L-arginine from L-ornithine and carbamoyl phosphate: step 3/3. This is Argininosuccinate lyase from Caulobacter vibrioides (strain ATCC 19089 / CIP 103742 / CB 15) (Caulobacter crescentus).